Here is an 889-residue protein sequence, read N- to C-terminus: Terminal uridylyltransferase 3 (889 aa).

The C2H2-type; atypical zinc-finger motif lies at 123-151 (VRCDLCAKMIESRDEEQIQEHFQVHHAAL). 4 residues coordinate Zn(2+): cysteine 125, cysteine 128, histidine 143, and histidine 148. UTP contacts are provided by residues serine 225 and 236–239 (SDAD). Residues aspartate 237 and aspartate 239 each contribute to the Mg(2+) site. Residue arginine 286 participates in RNA binding. Residues 394–398 (GVRNS), lysine 419, lysine 423, and 437–438 (SY) each bind UTP. Positions 505–572 (LGGLIPLFFL…LCIDDPYEDN (68 aa)) constitute a PAP-associated domain. The Nucleotide recognition motif (NRM) signature appears at 565–574 (IDDPYEDNFN). Disordered stretches follow at residues 675 to 702 (NNKSKEGDDDAEGVTNNQEGEPPDHVES) and 829 to 849 (RKKSKGSKKRKNAVRRGNHAG). Basic residues predominate over residues 829-846 (RKKSKGSKKRKNAVRRGN).

Belongs to the DNA polymerase type-B-like family. Mg(2+) serves as cofactor. It depends on Mn(2+) as a cofactor.

Its subcellular location is the cytoplasm. It carries out the reaction RNA(n) + UTP = RNA(n)-3'-uridine ribonucleotide + diphosphate. Functionally, terminal uridylyltransferase which catalyzes the addition of Us to the 3'-hydroxyl group of single-stranded RNAs. Does not mediate RNA-independent UTP polymerization. The protein is Terminal uridylyltransferase 3 of Trypanosoma brucei brucei.